A 105-amino-acid polypeptide reads, in one-letter code: Large ribosomal subunit protein uL24 (105 aa).

It belongs to the universal ribosomal protein uL24 family. Part of the 50S ribosomal subunit.

In terms of biological role, one of two assembly initiator proteins, it binds directly to the 5'-end of the 23S rRNA, where it nucleates assembly of the 50S subunit. One of the proteins that surrounds the polypeptide exit tunnel on the outside of the subunit. The protein is Large ribosomal subunit protein uL24 of Methylobacterium sp. (strain 4-46).